A 1446-amino-acid chain; its full sequence is Toll-like receptor 7 (1446 aa).

The first 16 residues, 1–16 (MAAILLLLLGFSWSLA), serve as a signal peptide directing secretion. Over 17–1049 (VESALAPKES…QHGIPESYIP (1033 aa)) the chain is Extracellular. LRR repeat units lie at residues 133 to 156 (LQTLEALRLDSCKLLQLPNNAFEG), 158 to 180 (ATLKSLRLSTHNSEWGPTRTLEL), 188 to 211 (LKQLTDLDLGDNNLRQLPSGFLCP), 213 to 235 (GNLQVLNLTRNRIRTAEQMGFAD), 246 to 270 (GSELQVLDASHNELRSISESWGISR), 271 to 294 (LRRLQHLNLAYNNLSELSGEALAG), 295 to 318 (LASLRIVNLSNNHLETLPEGLFAG), 320 to 342 (KELREIHLQQNELYELPKGLFHR), 344 to 368 (EQLLVVDLSGNQLTSNHVDNTTFAG), 369 to 392 (LIRLIVLNLAHNALTRIDYRTFKE), 393 to 416 (LYFLQILNLRNNSIGHIEDNAFLP), 417 to 440 (LYNLHTLNLAENRLHTLDDKLFNG), 442 to 464 (YVLSKLTLNNNLISVVEPAVFKN), 465 to 488 (CSDLKELDLSSNQLNEVPRALQDL), 489 to 511 (AMLRTLDLGENQIRTFDNQSFKN), 513 to 535 (HQLTGLRLIDNQIGNITVGMFQD), 536 to 559 (LPRLSVLNLAKNRIQSIERGSFDK), 561 to 582 (FELEAIRLDRNFLADINGVFAT), 584 to 605 (VSLLWLNLSENHLVWFDYAFIP), 606 to 629 (SNLKWLDIHGNYIEALGNYYKLQE), 631 to 652 (IRVKTLDASHNRITEIGPMSIP), 653 to 675 (NTIELLFINNNLIGNVQPNAFVD), and 677 to 699 (ANLARVDLYANQLSKLQLQQLRV). In terms of domain architecture, LRRCT spans 716 to 773 (NPFECDCTMDWLQRINNLTTRQHPRVMDMANIECVMPHARGAAVRPLSGLRPQDFLCR). Cystine bridges form between Cys722–Cys772, Cys796–Cys802, and Cys800–Cys815. LRR repeat units lie at residues 828 to 851 (PMDSSVVYLDGNNFPVLKNHAFIG), 852 to 875 (RKNLRALYVNGSQVAAIQNRTFAS), 876 to 899 (LASLQLLHLADNKLRTLHGYEFEQ), 900 to 923 (LSALRELYLQNNQLTTIENATLAP), 925 to 947 (AALELIRIDGNRLVTLPIWQMHA), and 951 to 979 (GTRLKSISLGRNQWSCRCQFLQALTSYVA). A disulfide bridge connects residues Cys966 and Cys993. Residues 1050–1070 (LLAAALALLFLLVVIAMVFAF) traverse the membrane as a helical segment. Residues 1071 to 1446 (RESLRIWLFA…QGPHVQAYLV (376 aa)) are Cytoplasmic-facing. The TIR domain occupies 1096-1233 (KLYDAVLLHS…HFWEKLRYAL (138 aa)). Disordered stretches follow at residues 1301–1332 (QNYSTATTATPSPRPQRRGEQPGSGSGGNHHL) and 1388–1446 (RPKR…AYLV). A compositionally biased stretch (polar residues) spans 1395–1413 (HLQQAQAGTLGSKASQAAH). Over residues 1414–1426 (QQQQQQQQQQQQQ) the composition is skewed to low complexity. Over residues 1427-1439 (PNPTAVSGQQQGP) the composition is skewed to polar residues.

This sequence belongs to the Toll-like receptor family. In terms of tissue distribution, expressed in the fan-shaped body and the ellipsoid body, which are components of the locomotion center in the CNS (at protein level).

The protein localises to the cell membrane. In terms of biological role, toll-related receptor which binds to the neurotrophins NT1 and spz5. Essential for antiviral autophagy, it detects and binds to the vesicular stomatitis virus (vsv) following infection. This role is likely to be independent of the canonical Toll, immune deficiency, and JAK-STAT signaling pathways. Functions in olfactory circuit assembly by promoting synaptic partner matching between olfactory receptor neurons (ORN) axons and projection neurons (PN) dendrites partners in the antennal lobe. Function in the Va1d ORNs is necessary and sufficient for correct targeting to their partner PN dendrites. Also involved in the targeting of other classes of ORN axons. Functions with Toll-6 to regulate motor axon targeting and neuronal survival in the central nervous system (CNS). May be an upstream component of the NF-kappa-B (rel) regulatory cascade. The sequence is that of Toll-like receptor 7 from Drosophila melanogaster (Fruit fly).